The chain runs to 344 residues: uncharacterized protein (344 aa).

This is an uncharacterized protein from Aquifex aeolicus (strain VF5).